The sequence spans 443 residues: Proline--tRNA ligase (443 aa).

Belongs to the class-II aminoacyl-tRNA synthetase family. ProS type 2 subfamily. In terms of assembly, homodimer.

It localises to the cytoplasm. It carries out the reaction tRNA(Pro) + L-proline + ATP = L-prolyl-tRNA(Pro) + AMP + diphosphate. Its function is as follows. Catalyzes the attachment of proline to tRNA(Pro) in a two-step reaction: proline is first activated by ATP to form Pro-AMP and then transferred to the acceptor end of tRNA(Pro). The sequence is that of Proline--tRNA ligase from Zymomonas mobilis subsp. mobilis (strain ATCC 31821 / ZM4 / CP4).